We begin with the raw amino-acid sequence, 737 residues long: MSRGCPENNNFLTNNNQMVLDMILYPLIGIPQTINWETVARLVPGLTPKECVKRFDELKSCGSSPVDNQYNPLMAAGEGPVETLATYIKSSLLDAQGDFQETPVDQDTVSKAGRHSIATTRNCSSESENCTARNAGEETGDSEGPNMVIHVCDEAKSLKEDFICPRDLLISEMKYFAEYLSVDAQRWEEVDISVHCDVHIFNWLIKYVKRNTKDSKDCELPALEPGNVISILISSEFLKMDSLVEQCIQYCHKNMNAIVAAPCNMNCINVNLLTRIADLFTHNEIDDLKDKKDKFRSKLFCKKIERLFDPEYFNPDSRNNAATLYRCCLCKKLLTRETERRISCIPGKINVDRHGNIIYIHIRDKTWDVHEYLNSLFEELKSWRDVYWRLWGTINWLTCSRCYQAFLCIEFSHCQYHSEVVVYSSAVNSLNTVGTGIYPCCNQKVLRFDPTQLTKGCKVRDHMVLLHDQGENDDSLSCPTAKILDDLHKHKDVIAVPFLKDPVSDPGVGSCDEKGLEYEILLEPNTPWGSKTGELNAFLSLKNWTLQLKQQSLFSEEEEYTTGSEVTEDEVGDEEEISKKQRKKEKPKKFTKPPKKQLSSPCSQKKEKTLEKSTSRDVSPFVVSMQKNKWDATRSLRFNQDAQREDDQRRMSEITGHLIKMRLGDLDRVKAKESKEFAGGIYSRLEAQVKASVPVTARQNSSDKNQSNIPQRHLFNYVHSNFIRNSQKLETSQMFIN.

The SANT domain maps to 21–59; that stretch reads DMILYPLIGIPQTINWETVARLVPGLTPKECVKRFDELK. One can recognise a BTB domain in the interval 147–255; sequence MVIHVCDEAK…QCIQYCHKNM (109 aa). Positions 555-576 are enriched in acidic residues; it reads SEEEEYTTGSEVTEDEVGDEEE. Positions 555-618 are disordered; sequence SEEEEYTTGS…TLEKSTSRDV (64 aa). A compositionally biased stretch (basic residues) spans 580–595; sequence KQRKKEKPKKFTKPPK. Over residues 604–615 the composition is skewed to basic and acidic residues; the sequence is QKKEKTLEKSTS.

It belongs to the KIAA1841 family. In terms of assembly, homodimer. Interacts (via the BTB domain) with HDAC1 and NCOR2.

Functionally, negatively regulates class switch recombination or isotype switching in splenic B-cells. The polypeptide is SANT and BTB domain regulator of class switch recombination (Rattus norvegicus (Rat)).